Reading from the N-terminus, the 80-residue chain is UPF0154 protein SZO_03240 (80 aa).

A helical membrane pass occupies residues 4–24 (AIWILLIIVALTAGLFGGIFI).

Belongs to the UPF0154 family.

The protein localises to the cell membrane. This is UPF0154 protein SZO_03240 from Streptococcus equi subsp. zooepidemicus (strain H70).